Here is a 119-residue protein sequence, read N- to C-terminus: 5-hydroxyisourate hydrolase (119 aa).

Residues H8, R47, and Y116 each coordinate substrate.

Belongs to the transthyretin family. 5-hydroxyisourate hydrolase subfamily. As to quaternary structure, homotetramer.

It catalyses the reaction 5-hydroxyisourate + H2O = 5-hydroxy-2-oxo-4-ureido-2,5-dihydro-1H-imidazole-5-carboxylate + H(+). It participates in purine metabolism; urate degradation; (S)-allantoin from urate: step 2/3. Catalyzes the hydrolysis of 5-hydroxyisourate (HIU) to 2-oxo-4-hydroxy-4-carboxy-5-ureidoimidazoline (OHCU). In Halalkalibacterium halodurans (strain ATCC BAA-125 / DSM 18197 / FERM 7344 / JCM 9153 / C-125) (Bacillus halodurans), this protein is 5-hydroxyisourate hydrolase.